The sequence spans 336 residues: Cyclin-H1-1 (336 aa).

An N-acetylalanine modification is found at alanine 2. The segment at lysine 297–glycine 336 is disordered. The span at arginine 312–arginine 322 shows a compositional bias: basic residues.

Belongs to the cyclin family. In terms of assembly, interacts with CDKA-1, CDKD-2 and CDKD-3, but not CDKD-1 and CDKF-1.

Its subcellular location is the cytoplasm. It localises to the nucleus. Functionally, associates with CDK-2 and CDK-3 and activates the CDK kinases. The protein is Cyclin-H1-1 (CYCH1-1) of Arabidopsis thaliana (Mouse-ear cress).